The sequence spans 427 residues: UDP-N-acetylglucosamine 1-carboxyvinyltransferase (427 aa).

22–23 (KN) is a phosphoenolpyruvate binding site. R92 contributes to the UDP-N-acetyl-alpha-D-glucosamine binding site. Catalysis depends on D116, which acts as the Proton donor. UDP-N-acetyl-alpha-D-glucosamine contacts are provided by D312 and M334.

Belongs to the EPSP synthase family. MurA subfamily.

The protein resides in the cytoplasm. The catalysed reaction is phosphoenolpyruvate + UDP-N-acetyl-alpha-D-glucosamine = UDP-N-acetyl-3-O-(1-carboxyvinyl)-alpha-D-glucosamine + phosphate. It participates in cell wall biogenesis; peptidoglycan biosynthesis. Functionally, cell wall formation. Adds enolpyruvyl to UDP-N-acetylglucosamine. The protein is UDP-N-acetylglucosamine 1-carboxyvinyltransferase of Borrelia garinii subsp. bavariensis (strain ATCC BAA-2496 / DSM 23469 / PBi) (Borreliella bavariensis).